The chain runs to 66 residues: UPF0434 protein M446_0487 (66 aa).

This sequence belongs to the UPF0434 family.

The protein is UPF0434 protein M446_0487 of Methylobacterium sp. (strain 4-46).